A 594-amino-acid polypeptide reads, in one-letter code: (-)-endo-fenchol synthase, chloroplastic (594 aa).

The N-terminal 50 residues, 1–50 (MSSLVMHVGIVNKPAITYLPTLSRSASNLHNVSSTRLQTSCSLQLDYKPV), are a transit peptide targeting the chloroplast. Residues Asp-348, Asp-352, Asp-492, and Glu-500 each contribute to the Mg(2+) site. Positions 348–352 (DDIYD) match the DDXXD motif motif.

This sequence belongs to the terpene synthase family. Tpsa subfamily. It depends on Mg(2+) as a cofactor. Mn(2+) is required as a cofactor. As to expression, expressed at high levels in leaves.

The protein localises to the plastid. It is found in the chloroplast. It catalyses the reaction (2E)-geranyl diphosphate = alpha-pinene + diphosphate. The enzyme catalyses (2E)-geranyl diphosphate + H2O = (1S,2S,4R)-endo-fenchol + diphosphate. It carries out the reaction (2E)-geranyl diphosphate = limonene + diphosphate. It functions in the pathway secondary metabolite biosynthesis; terpenoid biosynthesis. Monoterpene synthase involved in the biosynthesis of volatile compounds widely used in aromatherapy and folk medicine, and present in culinary herbs. Mediates the conversion of (2E)-geranyl diphosphate (GPP) into alpha fenchol, limonene and alpha-pinene and, as minor compounds, into beta-myrcene, alpha-terpinolene and alpha-phellandrene. This is (-)-endo-fenchol synthase, chloroplastic from Lavandula pedunculata subsp. lusitanica (French lavender).